The primary structure comprises 735 residues: E3 ubiquitin-protein ligase SH3RF2 (735 aa).

An RING-type zinc finger spans residues 12–53 (CPVCFEKLDVTAKVLPCQHTFCKPCLQRIFKAHKELRCPECR). 2 SH3 domains span residues 125-184 (DGVP…VIKQ) and 187-252 (QPPP…PNLS). Disordered stretches follow at residues 260–301 (SKGH…GSGQ) and 335–373 (TSPSMLTQHGDRADFPASSAGQVSTSHPAPASPGHSTAM). Residues 273–289 (LMSSPSRGKATNTSTLR) are compositionally biased toward polar residues. An interaction with PAK4 region spans residues 373-466 (MVSVPSSQQH…RHPTVCTTWA (94 aa)). In terms of domain architecture, SH3 3 spans 383–444 (LSTNMFVALH…PSDYVIPVFS (62 aa)). 3 disordered regions span residues 472-534 (VSSQ…PVQS), 612-637 (ETPIKSEPPPKPPASAPPSILVKPEN), and 649-735 (VRFQ…FPSK). Residues 523–534 (RKNGSLQRPVQS) are compositionally biased toward polar residues. Positions 617-627 (SEPPPKPPASA) are enriched in pro residues. The interval 647–652 (KTVRFQ) is interaction with PPP1CA. Residue Ser-655 is modified to Phosphoserine. Residues 715–735 (FSKTTPPVSTASVSQTLFPSK) are compositionally biased toward polar residues.

The protein belongs to the SH3RF family. As to quaternary structure, interacts with FASLG and PPP1CA. Interacts with PAK4 and TNFRSF1A. Interacts with DLK1, MAP3K10, MAPK8IP1/JIP1, MAPK8IP2/JIP2 and MAPK8IP3/JIP3. Interacts with RAC1 (both active GTP- or inactive GDP-bound forms). Autoubiquitinated.

Its subcellular location is the nucleus. The enzyme catalyses S-ubiquitinyl-[E2 ubiquitin-conjugating enzyme]-L-cysteine + [acceptor protein]-L-lysine = [E2 ubiquitin-conjugating enzyme]-L-cysteine + N(6)-ubiquitinyl-[acceptor protein]-L-lysine.. It functions in the pathway protein modification; protein ubiquitination. Functionally, has E3 ubiquitin-protein ligase activity. Acts as an anti-apoptotic regulator of the JNK pathway by ubiquitinating and promoting the degradation of SH3RF1, a scaffold protein that is required for pro-apoptotic JNK activation. Facilitates TNF-alpha-mediated recruitment of adapter proteins TRADD and RIPK1 to TNFRSF1A and regulates PAK4 protein stability via inhibition of its ubiquitin-mediated proteasomal degradation. Inhibits PPP1CA phosphatase activity. In Rattus norvegicus (Rat), this protein is E3 ubiquitin-protein ligase SH3RF2 (Sh3rf2).